A 336-amino-acid chain; its full sequence is Protein RecA (336 aa).

ATP is bound at residue 66–73 (GNESSGKT).

This sequence belongs to the RecA family.

The protein localises to the cytoplasm. In terms of biological role, can catalyze the hydrolysis of ATP in the presence of single-stranded DNA, the ATP-dependent uptake of single-stranded DNA by duplex DNA, and the ATP-dependent hybridization of homologous single-stranded DNAs. It interacts with LexA causing its activation and leading to its autocatalytic cleavage. This Mycoplasma pneumoniae (strain ATCC 29342 / M129 / Subtype 1) (Mycoplasmoides pneumoniae) protein is Protein RecA.